Reading from the N-terminus, the 196-residue chain is DnaA initiator-associating protein DiaA (196 aa).

The SIS domain occupies 34 to 196 (LVQSLLNGNK…DNTLFPHQDD (163 aa)).

It belongs to the SIS family. DiaA subfamily. As to quaternary structure, homotetramer; dimer of dimers.

In terms of biological role, required for the timely initiation of chromosomal replication via direct interactions with the DnaA initiator protein. This is DnaA initiator-associating protein DiaA from Shigella flexneri serotype 5b (strain 8401).